A 400-amino-acid chain; its full sequence is S-adenosylmethionine synthase (400 aa).

His17 contributes to the ATP binding site. Asp19 contacts Mg(2+). Residue Glu45 participates in K(+) binding. L-methionine is bound by residues Glu58 and Gln101. Positions 101–111 (QSADIAMGVDQ) are flexible loop. ATP-binding positions include 177–179 (DGK), 244–245 (RF), Asp253, 259–260 (RK), Ala276, and Lys280. Asp253 provides a ligand contact to L-methionine. An L-methionine-binding site is contributed by Lys284.

It belongs to the AdoMet synthase family. In terms of assembly, homotetramer; dimer of dimers. Mg(2+) serves as cofactor. The cofactor is K(+).

The protein localises to the cytoplasm. It catalyses the reaction L-methionine + ATP + H2O = S-adenosyl-L-methionine + phosphate + diphosphate. It functions in the pathway amino-acid biosynthesis; S-adenosyl-L-methionine biosynthesis; S-adenosyl-L-methionine from L-methionine: step 1/1. Its function is as follows. Catalyzes the formation of S-adenosylmethionine (AdoMet) from methionine and ATP. The overall synthetic reaction is composed of two sequential steps, AdoMet formation and the subsequent tripolyphosphate hydrolysis which occurs prior to release of AdoMet from the enzyme. The sequence is that of S-adenosylmethionine synthase from Bacillus subtilis (strain 168).